A 513-amino-acid chain; its full sequence is GMP synthase [glutamine-hydrolyzing] (513 aa).

The Glutamine amidotransferase type-1 domain maps to 3-192 (TVVVLDYGSQ…VSKIAKMEKN (190 aa)). Cys80 (nucleophile) is an active-site residue. Catalysis depends on residues His166 and Glu168. Residues 193–388 (WEMKDFVSEK…LELPQSMINR (196 aa)) enclose the GMPS ATP-PPase domain. An ATP-binding site is contributed by 220–226 (SGGVDSS).

In terms of assembly, homodimer.

The enzyme catalyses XMP + L-glutamine + ATP + H2O = GMP + L-glutamate + AMP + diphosphate + 2 H(+). The protein operates within purine metabolism; GMP biosynthesis; GMP from XMP (L-Gln route): step 1/1. Its function is as follows. Catalyzes the synthesis of GMP from XMP. In Thermosipho melanesiensis (strain DSM 12029 / CIP 104789 / BI429), this protein is GMP synthase [glutamine-hydrolyzing].